Here is a 343-residue protein sequence, read N- to C-terminus: Arginine N-succinyltransferase (343 aa).

Leucine 125 lines the succinyl-CoA pocket. Histidine 229 serves as the catalytic Proton donor.

It belongs to the arginine N-succinyltransferase family.

It carries out the reaction succinyl-CoA + L-arginine = N(2)-succinyl-L-arginine + CoA + H(+). It functions in the pathway amino-acid degradation; L-arginine degradation via AST pathway; L-glutamate and succinate from L-arginine: step 1/5. Its function is as follows. Catalyzes the transfer of succinyl-CoA to arginine to produce N(2)-succinylarginine. The chain is Arginine N-succinyltransferase from Photorhabdus laumondii subsp. laumondii (strain DSM 15139 / CIP 105565 / TT01) (Photorhabdus luminescens subsp. laumondii).